Reading from the N-terminus, the 335-residue chain is Tetraacyldisaccharide 4'-kinase (335 aa).

58–65 (TMGGAGKT) is an ATP binding site.

It belongs to the LpxK family.

The enzyme catalyses a lipid A disaccharide + ATP = a lipid IVA + ADP + H(+). It participates in glycolipid biosynthesis; lipid IV(A) biosynthesis; lipid IV(A) from (3R)-3-hydroxytetradecanoyl-[acyl-carrier-protein] and UDP-N-acetyl-alpha-D-glucosamine: step 6/6. Functionally, transfers the gamma-phosphate of ATP to the 4'-position of a tetraacyldisaccharide 1-phosphate intermediate (termed DS-1-P) to form tetraacyldisaccharide 1,4'-bis-phosphate (lipid IVA). In Caulobacter vibrioides (strain ATCC 19089 / CIP 103742 / CB 15) (Caulobacter crescentus), this protein is Tetraacyldisaccharide 4'-kinase.